A 126-amino-acid chain; its full sequence is Aspartate 1-decarboxylase (126 aa).

The active-site Schiff-base intermediate with substrate; via pyruvic acid is Ser-25. Ser-25 carries the post-translational modification Pyruvic acid (Ser). Thr-57 serves as a coordination point for substrate. Residue Tyr-58 is the Proton donor of the active site. 73-75 (GAA) contributes to the substrate binding site.

The protein belongs to the PanD family. Heterooctamer of four alpha and four beta subunits. It depends on pyruvate as a cofactor. Post-translationally, is synthesized initially as an inactive proenzyme, which is activated by self-cleavage at a specific serine bond to produce a beta-subunit with a hydroxyl group at its C-terminus and an alpha-subunit with a pyruvoyl group at its N-terminus.

The protein resides in the cytoplasm. The enzyme catalyses L-aspartate + H(+) = beta-alanine + CO2. It functions in the pathway cofactor biosynthesis; (R)-pantothenate biosynthesis; beta-alanine from L-aspartate: step 1/1. In terms of biological role, catalyzes the pyruvoyl-dependent decarboxylation of aspartate to produce beta-alanine. The polypeptide is Aspartate 1-decarboxylase (Alcanivorax borkumensis (strain ATCC 700651 / DSM 11573 / NCIMB 13689 / SK2)).